The primary structure comprises 340 residues: Nesprin-4 (340 aa).

Disordered regions lie at residues 1–86 and 254–277; these read MAQF…DGGK and HRRR…DAML. Over 1-291 the chain is Cytoplasmic; the sequence is MAQFPLLGHG…GVPAPASRRP (291 aa). Positions 53-63 are enriched in basic and acidic residues; that stretch reads APEHFMDEPKS. The KASH domain maps to 283–340; the sequence is VPAPASRRPLTFLLLLLFLLLVGATLLLPLSGVPCCSHTRLARTPYLVLSYVNGLPPI. The helical; Anchor for type IV membrane protein transmembrane segment at 292-312 threads the bilayer; the sequence is LTFLLLLLFLLLVGATLLLPL. Topologically, residues 313-340 are perinuclear space; the sequence is SGVPCCSHTRLARTPYLVLSYVNGLPPI.

It belongs to the nesprin family. In terms of assembly, core component of LINC complexes which are composed of inner nuclear membrane SUN domain-containing proteins coupled to outer nuclear membrane KASH domain-containing nesprins. SUN and KASH domain-containing proteins seem to bind each other promiscuously; however, differentially expression of LINC complex constituents can give rise to specific assemblies. Probably part of a SUN1-containing LINC complex. Interacts with kinesins KIF5B and KLC1.

It localises to the nucleus outer membrane. As a component of the LINC (LInker of Nucleoskeleton and Cytoskeleton) complex, involved in the connection between the nuclear lamina and the cytoskeleton. The nucleocytoplasmic interactions established by the LINC complex play an important role in the transmission of mechanical forces across the nuclear envelope and in nuclear movement and positioning. Behaves as a kinesin cargo, providing a functional binding site for kinesin-1 at the nuclear envelope. Hence may contribute to the establishment of secretory epithelial morphology, by promoting kinesin-dependent apical migration of the centrosome and Golgi apparatus and basal localization of the nucleus. The sequence is that of Nesprin-4 (Syne4) from Rattus norvegicus (Rat).